The primary structure comprises 68 residues: Conotoxin Cal14.13a (68 aa).

Residues 1 to 21 (MKLCVVIVLLMLAMPFNGGEA) form the signal peptide. Residues 22–38 (SRFFNQHARSQRSGMKT) constitute a propeptide that is removed on maturation. Val-66 is subject to Valine amide.

Post-translationally, contains 2 disulfide bonds. As to expression, expressed by the venom duct.

Its subcellular location is the secreted. Its function is as follows. Probable neurotoxin with unknown target. Possibly targets ion channels. The sequence is that of Conotoxin Cal14.13a from Californiconus californicus (California cone).